The sequence spans 453 residues: tRNA-2-methylthio-N(6)-dimethylallyladenosine synthase (453 aa).

One can recognise an MTTase N-terminal domain in the interval 4–118 (KKFYIENYGC…IPNLINNFFK (115 aa)). [4Fe-4S] cluster is bound by residues Cys-13, Cys-49, Cys-83, Cys-156, Cys-160, and Cys-163. In terms of domain architecture, Radical SAM core spans 142-388 (EEKKITAFVT…NLQKTHSYYR (247 aa)). A TRAM domain is found at 390-453 (RKYIGSIQDI…SATLVGDIYV (64 aa)).

Belongs to the methylthiotransferase family. MiaB subfamily. Monomer. It depends on [4Fe-4S] cluster as a cofactor.

It localises to the cytoplasm. It carries out the reaction N(6)-dimethylallyladenosine(37) in tRNA + (sulfur carrier)-SH + AH2 + 2 S-adenosyl-L-methionine = 2-methylsulfanyl-N(6)-dimethylallyladenosine(37) in tRNA + (sulfur carrier)-H + 5'-deoxyadenosine + L-methionine + A + S-adenosyl-L-homocysteine + 2 H(+). In terms of biological role, catalyzes the methylthiolation of N6-(dimethylallyl)adenosine (i(6)A), leading to the formation of 2-methylthio-N6-(dimethylallyl)adenosine (ms(2)i(6)A) at position 37 in tRNAs that read codons beginning with uridine. The polypeptide is tRNA-2-methylthio-N(6)-dimethylallyladenosine synthase (Karelsulcia muelleri (strain GWSS) (Sulcia muelleri)).